The primary structure comprises 138 residues: Photosystem II extrinsic protein U (138 aa).

The N-terminal stretch at 1–28 (MSRVVSALMGLVLMFGCAFFSVQPQAQA) is a signal peptide. A propeptide spanning residues 29-42 (LDLSNGFVSAAVLG) is cleaved from the precursor.

It belongs to the PsbU family. PSII is composed of 1 copy each of membrane proteins PsbA, PsbB, PsbC, PsbD, PsbE, PsbF, PsbH, PsbI, PsbJ, PsbK, PsbL, PsbM, PsbT, PsbX, PsbY, PsbZ, Psb30/Ycf12, peripheral proteins PsbO, CyanoQ (PsbQ), PsbU, PsbV and a large number of cofactors. It forms dimeric complexes.

It is found in the cellular thylakoid membrane. One of the extrinsic, lumenal subunits of photosystem II (PSII). PSII is a light-driven water plastoquinone oxidoreductase, using light energy to abstract electrons from H(2)O, generating a proton gradient subsequently used for ATP formation. The extrinsic proteins stabilize the structure of photosystem II oxygen-evolving complex (OEC), the ion environment of oxygen evolution and protect the OEC against heat-induced inactivation. This is Photosystem II extrinsic protein U from Picosynechococcus sp. (strain ATCC 27264 / PCC 7002 / PR-6) (Agmenellum quadruplicatum).